Consider the following 255-residue polypeptide: Octanoyltransferase (255 aa).

The disordered stretch occupies residues 1–21 (MCATPVSPSPESPRSAQAGAA). Residues 56–242 (FETSDEIWLV…SLIANIDGIP (187 aa)) form the BPL/LPL catalytic domain. Substrate-binding positions include 96 to 103 (RGGQITYH), 173 to 175 (ALG), and 186 to 188 (GVS). The active-site Acyl-thioester intermediate is Cys-204.

The protein belongs to the LipB family.

It is found in the cytoplasm. The enzyme catalyses octanoyl-[ACP] + L-lysyl-[protein] = N(6)-octanoyl-L-lysyl-[protein] + holo-[ACP] + H(+). It functions in the pathway protein modification; protein lipoylation via endogenous pathway; protein N(6)-(lipoyl)lysine from octanoyl-[acyl-carrier-protein]: step 1/2. Catalyzes the transfer of endogenously produced octanoic acid from octanoyl-acyl-carrier-protein onto the lipoyl domains of lipoate-dependent enzymes. Lipoyl-ACP can also act as a substrate although octanoyl-ACP is likely to be the physiological substrate. This chain is Octanoyltransferase, found in Paraburkholderia phymatum (strain DSM 17167 / CIP 108236 / LMG 21445 / STM815) (Burkholderia phymatum).